The sequence spans 413 residues: Chloramphenicol resistance protein CraA (413 aa).

A run of 12 helical transmembrane segments spans residues 18-38, 55-75, 84-104, 110-130, 147-167, 170-190, 228-248, 260-280, 289-309, 312-332, 349-369, and 373-393; these read LMFP…NDLI, WAPS…WLLG, KKVL…ILLT, FLTL…VGYA, LMAN…AFLI, VSWH…WVGL, ALPL…IILV, LAQF…IKII, VLIG…GVVW, YLIP…GISF, TVAA…IELV, and YTQF…ALWF.

It belongs to the major facilitator superfamily.

It is found in the cell inner membrane. Functionally, efflux pump that mediates resistance to chloramphenicol. The protein is Chloramphenicol resistance protein CraA of Acinetobacter baumannii (strain ATCC 19606 / DSM 30007 / JCM 6841 / CCUG 19606 / CIP 70.34 / NBRC 109757 / NCIMB 12457 / NCTC 12156 / 81).